We begin with the raw amino-acid sequence, 106 residues long: MPIKGPKARIKLSGLNPRELDRICSQIKEIANKTGVELSGPVPLPTRRMVVPVRKAPDGEGSETWDHWEMRVHKRLIDISADERALRQIMRIQVPRDVNIEIVLES.

It belongs to the universal ribosomal protein uS10 family. As to quaternary structure, part of the 30S ribosomal subunit.

Functionally, involved in the binding of tRNA to the ribosomes. The polypeptide is Small ribosomal subunit protein uS10 (Archaeoglobus fulgidus (strain ATCC 49558 / DSM 4304 / JCM 9628 / NBRC 100126 / VC-16)).